A 162-amino-acid chain; its full sequence is Nucleotide-binding protein ACIAD3137 (162 aa).

It belongs to the YajQ family.

Functionally, nucleotide-binding protein. In Acinetobacter baylyi (strain ATCC 33305 / BD413 / ADP1), this protein is Nucleotide-binding protein ACIAD3137.